An 86-amino-acid chain; its full sequence is MKTLLLTLVVLTIACLDLGYTKTCFNDNLANPKTTELCRHSMYFCFKNSWIAGGVERIERGCSLTCPDIKYNGKYIYCCTRDNCNA.

An N-terminal signal peptide occupies residues 1–21 (MKTLLLTLVVLTIACLDLGYT). Disulfide bonds link cysteine 24/cysteine 45, cysteine 38/cysteine 62, cysteine 66/cysteine 78, and cysteine 79/cysteine 84.

Belongs to the three-finger toxin family. Short-chain subfamily. Orphan group IX sub-subfamily. In terms of tissue distribution, expressed by the venom gland.

The protein localises to the secreted. The protein is Candiduxin-2 of Bungarus candidus (Malayan krait).